The following is a 661-amino-acid chain: L-type lectin-domain containing receptor kinase V.5 (661 aa).

A signal peptide spans 1–25 (MSRELIILCQPILVLFLTLFYNSHG). At 26–282 (YFVSQGSVGI…KTSNRTKTVL (257 aa)) the chain is on the extracellular side. The interval 30-250 (QGSVGIGFNG…GAIHYLMGWL (221 aa)) is legume-lectin like. 5 N-linked (GlcNAc...) asparagine glycosylation sites follow: asparagine 45, asparagine 64, asparagine 116, asparagine 198, and asparagine 276. Residues 283 to 303 (AVCLTVSVFAAFVASWIGFVF) form a helical membrane-spanning segment. Residues 304 to 661 (YLRHKKVKEV…TDSSFVSHGR (358 aa)) lie on the Cytoplasmic side of the membrane. Positions 338-596 (FKEKQLLGKG…LGVLCSHQAA (259 aa)) constitute a Protein kinase domain. ATP-binding positions include 344-352 (LGKGGFGQV) and lysine 367. Residue aspartate 464 is the Proton acceptor of the active site.

The protein in the C-terminal section; belongs to the protein kinase superfamily. Ser/Thr protein kinase family. This sequence in the N-terminal section; belongs to the leguminous lectin family. Autophosphorylated on a Ser residue. In terms of tissue distribution, expressed at low levels in stems, leaves, flowers and siliques.

The protein localises to the cell membrane. It catalyses the reaction L-seryl-[protein] + ATP = O-phospho-L-seryl-[protein] + ADP + H(+). The catalysed reaction is L-threonyl-[protein] + ATP = O-phospho-L-threonyl-[protein] + ADP + H(+). In terms of biological role, confers resistance to the pathogenic oomycetes Phytophthora infestans and Phytophthora capsici, but confers susceptibility to the pathogenic bacteria Pseudomonas syringae. The protein is L-type lectin-domain containing receptor kinase V.5 of Arabidopsis thaliana (Mouse-ear cress).